The following is a 293-amino-acid chain: CDP-abequose synthase (293 aa).

Residue T113 coordinates substrate. The active-site Proton acceptor is the Y130.

It belongs to the NAD(P)-dependent epimerase/dehydratase family.

The catalysed reaction is CDP-alpha-D-abequose + NADP(+) = CDP-4-dehydro-3,6-dideoxy-alpha-D-glucose + NADPH + H(+). It participates in bacterial outer membrane biogenesis; LPS O-antigen biosynthesis. The chain is CDP-abequose synthase from Salmonella muenchen.